Reading from the N-terminus, the 105-residue chain is Blood plasma apolipoprotein LAL1 (105 aa).

A signal peptide spans Met-1 to Ser-21. A propeptide spanning residues Glu-22 to Ser-29 is cleaved from the precursor.

In terms of tissue distribution, plasma.

The protein resides in the secreted. This chain is Blood plasma apolipoprotein LAL1, found in Petromyzon marinus (Sea lamprey).